The primary structure comprises 277 residues: WRKY transcription factor 68 (277 aa).

Residues 51-96 (TPLMHFPTTPNSSSSEAVNGDDEEEEDGEEQQHKTKKRFKFTKMSR) are disordered. A compositionally biased stretch (polar residues) spans 58–67 (TTPNSSSSEA). Residues 69-79 (NGDDEEEEDGE) are compositionally biased toward acidic residues. Basic residues predominate over residues 84 to 96 (KTKKRFKFTKMSR). The WRKY DNA-binding region spans 112–177 (SEVLHLDDGY…YEGQHTHPRP (66 aa)). The tract at residues 183–206 (KEGSSPSNGSASRAHIGLPTLPPQ) is disordered.

This sequence belongs to the WRKY group II-c family.

It is found in the nucleus. In terms of biological role, transcription factor. Interacts specifically with the W box (5'-(T)TGAC[CT]-3'), a frequently occurring elicitor-responsive cis-acting element. The protein is WRKY transcription factor 68 (WRKY68) of Arabidopsis thaliana (Mouse-ear cress).